The primary structure comprises 164 residues: Anterior gradient protein 2 (164 aa).

The first 20 residues, 1–20 (METVLKTLFVLLVATSLTLA), serve as a signal peptide directing secretion. 2 short sequence motifs (homodimer stabilization; interchain) span residues 34–43 (SRGWGDNLEW) and 49–56 (EGLYKAKT).

This sequence belongs to the AGR family. Monomer and homodimer.

Its subcellular location is the secreted. The protein localises to the endoplasmic reticulum. This is Anterior gradient protein 2 from Xenopus tropicalis (Western clawed frog).